Here is a 382-residue protein sequence, read N- to C-terminus: Proton extrusion protein PxcA (382 aa).

Transmembrane regions (helical) follow at residues 156–176, 257–277, 305–325, and 340–360; these read TLISLKVLLLLILVPLLVQQV, AVKNVLADISATIAFVVVCLF, IILFTDIFVGFHSPEGWTVLL, and FILLFIATFPVILATIFKYWI.

Belongs to the CemA family.

Its subcellular location is the cell inner membrane. In terms of biological role, required for H(+) efflux immediately after light irradiation to form a rapid H(+) concentration gradient across the thylakoid membranes. Together with PxcL, contributes to transient H(+) uptake following dark to light transition. This Synechococcus sp. (strain CC9311) protein is Proton extrusion protein PxcA.